The chain runs to 271 residues: UPF0758 protein ACIAD3126 (271 aa).

Residues 120–242 enclose the MPN domain; sequence NLNSSRLVLD…TFSFAERALL (123 aa). Zn(2+)-binding residues include H191, H193, and D204. The short motif at 191-204 is the JAMM motif element; that stretch reads HNHPFGKAEPSAAD.

Belongs to the UPF0758 family.

The protein is UPF0758 protein ACIAD3126 of Acinetobacter baylyi (strain ATCC 33305 / BD413 / ADP1).